The chain runs to 61 residues: Large ribosomal subunit protein uL29 (61 aa).

Belongs to the universal ribosomal protein uL29 family.

The polypeptide is Large ribosomal subunit protein uL29 (Campylobacter jejuni subsp. jejuni serotype O:6 (strain 81116 / NCTC 11828)).